The primary structure comprises 543 residues: CTP synthase (543 aa).

The segment at 1 to 265 (MARYIFITGG…DGEVLRHFGL (265 aa)) is amidoligase domain. Ser13 is a CTP binding site. Ser13 contacts UTP. 14–19 (SLGKGL) provides a ligand contact to ATP. Tyr54 serves as a coordination point for L-glutamine. Asp71 is an ATP binding site. The Mg(2+) site is built by Asp71 and Glu139. CTP-binding positions include 146-148 (DIE), 186-191 (KTKPTQ), and Lys222. Residues 186–191 (KTKPTQ) and Lys222 each bind UTP. In terms of domain architecture, Glutamine amidotransferase type-1 spans 290–542 (TIGVVGKYVG…IAAAVKQARL (253 aa)). Gly354 provides a ligand contact to L-glutamine. Cys381 acts as the Nucleophile; for glutamine hydrolysis in catalysis. Residues 382-385 (LGMQ), Glu405, and Arg470 contribute to the L-glutamine site. Residues His515 and Glu517 contribute to the active site.

This sequence belongs to the CTP synthase family. Homotetramer.

It catalyses the reaction UTP + L-glutamine + ATP + H2O = CTP + L-glutamate + ADP + phosphate + 2 H(+). It carries out the reaction L-glutamine + H2O = L-glutamate + NH4(+). The enzyme catalyses UTP + NH4(+) + ATP = CTP + ADP + phosphate + 2 H(+). It participates in pyrimidine metabolism; CTP biosynthesis via de novo pathway; CTP from UDP: step 2/2. With respect to regulation, allosterically activated by GTP, when glutamine is the substrate; GTP has no effect on the reaction when ammonia is the substrate. The allosteric effector GTP functions by stabilizing the protein conformation that binds the tetrahedral intermediate(s) formed during glutamine hydrolysis. Inhibited by the product CTP, via allosteric rather than competitive inhibition. Its function is as follows. Catalyzes the ATP-dependent amination of UTP to CTP with either L-glutamine or ammonia as the source of nitrogen. Regulates intracellular CTP levels through interactions with the four ribonucleotide triphosphates. In Novosphingobium aromaticivorans (strain ATCC 700278 / DSM 12444 / CCUG 56034 / CIP 105152 / NBRC 16084 / F199), this protein is CTP synthase.